A 251-amino-acid polypeptide reads, in one-letter code: 3-deoxy-manno-octulosonate cytidylyltransferase (251 aa).

It belongs to the KdsB family.

It is found in the cytoplasm. The enzyme catalyses 3-deoxy-alpha-D-manno-oct-2-ulosonate + CTP = CMP-3-deoxy-beta-D-manno-octulosonate + diphosphate. It participates in nucleotide-sugar biosynthesis; CMP-3-deoxy-D-manno-octulosonate biosynthesis; CMP-3-deoxy-D-manno-octulosonate from 3-deoxy-D-manno-octulosonate and CTP: step 1/1. It functions in the pathway bacterial outer membrane biogenesis; lipopolysaccharide biosynthesis. Functionally, activates KDO (a required 8-carbon sugar) for incorporation into bacterial lipopolysaccharide in Gram-negative bacteria. This Vibrio vulnificus (strain CMCP6) protein is 3-deoxy-manno-octulosonate cytidylyltransferase.